Consider the following 348-residue polypeptide: MKKTDELRTIRIDPLVTPAELAQRHVITPSIMDTVISTRKNIANIMTGLDPRLLVIIGPCSVHDPVAAVEYAGRLQVLRKKYESRLEIVMRTYFEKPRTVIGWKGLISDPDLNGSFHVNNGLSIARKLLLDINKLGVPAATEFLDMVIGQFIADLISWGAIGARTTESQIHREMASALSCPVGFKNGTDGNIRIAVDAIRAASVEHLFLAPNKYGQMTINYTSGNPFGHVIMRGGKSPNYHAKDIAIAIKYLHEFTLSEYLMIDFSHGNCLKQHRRQLDVGESIAKQIRDGSTAIFGVMIESFLEEGSQKVIDNKSLVYGKSITDPCLGWNDSAFLLEKLANAVDSRF.

The protein belongs to the class-I DAHP synthase family.

It carries out the reaction D-erythrose 4-phosphate + phosphoenolpyruvate + H2O = 7-phospho-2-dehydro-3-deoxy-D-arabino-heptonate + phosphate. The protein operates within metabolic intermediate biosynthesis; chorismate biosynthesis; chorismate from D-erythrose 4-phosphate and phosphoenolpyruvate: step 1/7. Its function is as follows. Stereospecific condensation of phosphoenolpyruvate (PEP) and D-erythrose-4-phosphate (E4P) giving rise to 3-deoxy-D-arabino-heptulosonate-7-phosphate (DAHP). The polypeptide is Phospho-2-dehydro-3-deoxyheptonate aldolase, Trp-sensitive (aroH) (Buchnera aphidicola subsp. Baizongia pistaciae (strain Bp)).